We begin with the raw amino-acid sequence, 703 residues long: UvrABC system protein B (703 aa).

Positions 33-419 (ERIENGENDV…SDGVVEQIIR (387 aa)) constitute a Helicase ATP-binding domain. 46 to 53 (GATGTGKT) lines the ATP pocket. Residues 99-122 (YYDYYQPEAYIPQTDTYIEKDSNI) carry the Beta-hairpin motif. In terms of domain architecture, Helicase C-terminal spans 436–589 (QIDDLLAEIK…QIAYNQEHGI (154 aa)). Residues 659–694 (ADLIRQLSEQMHTAAEQLQFELAARLRDEIRDLKKE) form the UVR domain.

It belongs to the UvrB family. As to quaternary structure, forms a heterotetramer with UvrA during the search for lesions. Interacts with UvrC in an incision complex.

It localises to the cytoplasm. In terms of biological role, the UvrABC repair system catalyzes the recognition and processing of DNA lesions. A damage recognition complex composed of 2 UvrA and 2 UvrB subunits scans DNA for abnormalities. Upon binding of the UvrA(2)B(2) complex to a putative damaged site, the DNA wraps around one UvrB monomer. DNA wrap is dependent on ATP binding by UvrB and probably causes local melting of the DNA helix, facilitating insertion of UvrB beta-hairpin between the DNA strands. Then UvrB probes one DNA strand for the presence of a lesion. If a lesion is found the UvrA subunits dissociate and the UvrB-DNA preincision complex is formed. This complex is subsequently bound by UvrC and the second UvrB is released. If no lesion is found, the DNA wraps around the other UvrB subunit that will check the other stand for damage. This chain is UvrABC system protein B, found in Bifidobacterium longum (strain NCC 2705).